The following is a 469-amino-acid chain: Ribonuclease Y (469 aa).

The helical transmembrane segment at 6-26 threads the bilayer; the sequence is VTLILVGVIIFLFISLFFYVI. The KH domain maps to 149–209; sequence FSFTIKLENE…IRREKAKRTM (61 aa). The HD domain maps to 276–369; it reads VLLHCVEAAV…VKVVDKLSAS (94 aa).

It belongs to the RNase Y family.

It localises to the cell membrane. Functionally, endoribonuclease that initiates mRNA decay. The chain is Ribonuclease Y from Malacoplasma penetrans (strain HF-2) (Mycoplasma penetrans).